Consider the following 438-residue polypeptide: Polycomb protein eed-B (438 aa).

Residues 1-70 are disordered; sequence MSEASGRAAG…GRKGWGKGKW (70 aa). Polar residues predominate over residues 40 to 57; that stretch reads SIESGTNTERPDTPTNAA. 7 WD repeats span residues 88–131, 139–182, 185–225, 231–270, 301–338, 356–396, and 405–438; these read DHNQ…DIRL, DADE…CIKH, GHGN…LVAI, GHRD…MKTA, IHRN…DDIE, SQCD…PHKA, and KCAS…DRLR.

The protein belongs to the WD repeat ESC family. As to quaternary structure, component of the prc2/eed-ezh2 complex. Can interact with ezh2, hdac1 and taf9. Interacts with yy1.

It localises to the nucleus. Polycomb group (PcG) protein. Component of the prc2/eed-ezh2 complex, which methylates 'Lys-9' and 'Lys-27' of histone H3, leading to transcriptional repression of the affected target gene. May play a role in neural induction. In Xenopus laevis (African clawed frog), this protein is Polycomb protein eed-B (eed-b).